A 424-amino-acid chain; its full sequence is Phosphoprotein associated with glycosphingolipid-enriched microdomains 1 (424 aa).

The Extracellular portion of the chain corresponds to Met1–Met17. The chain crosses the membrane as a helical; Signal-anchor for type III membrane protein span at residues Val18 to Leu38. Residues Cys39 and Cys42 are each lipidated (S-palmitoyl cysteine). Topologically, residues Cys39–Leu424 are cytoplasmic. Phosphoserine occurs at positions 52 and 63. Tyr107 carries the phosphotyrosine; by LYN modification. The residue at position 157 (Ser157) is a Phosphoserine. Phosphotyrosine is present on residues Tyr165, Tyr183, and Tyr224. A disordered region spans residues Asp194 to Cys347. Residues Ala215–Asn230 are compositionally biased toward basic and acidic residues. Ser226 is subject to Phosphoserine. Positions Ser236–Ser247 are enriched in polar residues. Phosphotyrosine; by FYN and LYN is present on Tyr314. The interval Tyr314–Val317 is interaction with CSK. The span at Ser331–Cys347 shows a compositional bias: polar residues. Ser346 is modified (phosphoserine). Phosphotyrosine is present on residues Tyr351, Tyr381, and Tyr409. The interval Pro361–Leu424 is disordered. An interaction with NHERF1 region spans residues Thr422 to Leu424.

As to quaternary structure, interacts with NHERF1/EBP50. In resting T-cells, part of a PAG1-NHERF1-MSN complex which is disrupted upon TCR activation. When phosphorylated, interacts with CSK. Identified in a complex with LYN and STAT3. Interacts with LYN. Post-translationally, palmitoylated. Phosphorylated by FYN on Tyr-314 in resting T-cells; which promotes interaction with CSK. Dephosphorylated by PTPRC/CD45 upon TCR activation; which leads to CSK dissociation. May also be dephosphorylated by PTPN11. Hyperphosphorylated in mast cells upon FCER1 activation. Phosphorylated by LYN in response to EPO. Ubiquitously expressed, with highest levels in developing brain, lung, thymus, spleen and testis. Present in mast cells.

It localises to the cell membrane. In terms of biological role, negatively regulates TCR (T-cell antigen receptor)-mediated signaling in T-cells and FCER1 (high affinity immunoglobulin epsilon receptor)-mediated signaling in mast cells. Promotes CSK activation and recruitment to lipid rafts, which results in LCK inhibition. Inhibits immunological synapse formation by preventing dynamic arrangement of lipid raft proteins. May be involved in cell adhesion signaling. The protein is Phosphoprotein associated with glycosphingolipid-enriched microdomains 1 (Pag1) of Rattus norvegicus (Rat).